Here is a 111-residue protein sequence, read N- to C-terminus: Small ribosomal subunit protein uS17 (111 aa).

This sequence belongs to the universal ribosomal protein uS17 family. In terms of assembly, part of the 30S ribosomal subunit.

Its function is as follows. One of the primary rRNA binding proteins, it binds specifically to the 5'-end of 16S ribosomal RNA. The polypeptide is Small ribosomal subunit protein uS17 (Archaeoglobus fulgidus (strain ATCC 49558 / DSM 4304 / JCM 9628 / NBRC 100126 / VC-16)).